Here is a 332-residue protein sequence, read N- to C-terminus: Flotillin-like protein FloA (332 aa).

2 consecutive transmembrane segments (helical) span residues 6–26 (LGYL…FSFV) and 28–48 (VGLW…YMIG).

This sequence belongs to the flotillin-like FloA family. In terms of assembly, homooligomerizes.

The protein localises to the cell membrane. Its subcellular location is the membrane raft. Found in functional membrane microdomains (FMM) that may be equivalent to eukaryotic membrane rafts. FMMs are highly dynamic and increase in number as cells age. Flotillins are thought to be important factors in membrane fluidity. The polypeptide is Flotillin-like protein FloA (Symbiobacterium thermophilum (strain DSM 24528 / JCM 14929 / IAM 14863 / T)).